The chain runs to 151 residues: Deoxyuridine 5'-triphosphate nucleotidohydrolase (151 aa).

Substrate-binding positions include Arg70–Gly72, Asn83, Leu87–Asp89, and Met97.

The protein belongs to the dUTPase family. It depends on Mg(2+) as a cofactor.

It catalyses the reaction dUTP + H2O = dUMP + diphosphate + H(+). Its pathway is pyrimidine metabolism; dUMP biosynthesis; dUMP from dCTP (dUTP route): step 2/2. This enzyme is involved in nucleotide metabolism: it produces dUMP, the immediate precursor of thymidine nucleotides and it decreases the intracellular concentration of dUTP so that uracil cannot be incorporated into DNA. This Glaesserella parasuis serovar 5 (strain SH0165) (Haemophilus parasuis) protein is Deoxyuridine 5'-triphosphate nucleotidohydrolase.